The sequence spans 114 residues: Integration host factor subunit alpha (114 aa).

It belongs to the bacterial histone-like protein family. As to quaternary structure, heterodimer of an alpha and a beta chain.

Functionally, this protein is one of the two subunits of integration host factor, a specific DNA-binding protein that functions in genetic recombination as well as in transcriptional and translational control. This Afipia carboxidovorans (strain ATCC 49405 / DSM 1227 / KCTC 32145 / OM5) (Oligotropha carboxidovorans) protein is Integration host factor subunit alpha.